The chain runs to 619 residues: Probable ATP-dependent RNA helicase DDX59 (619 aa).

Positions 1–101 (MFVPRSLKIK…KSFSKTQRWP (101 aa)) are disordered. Residues 12–27 (SSNDDLKSGEAKKSKP) are compositionally biased toward basic and acidic residues. Lys26 participates in a covalent cross-link: Glycyl lysine isopeptide (Lys-Gly) (interchain with G-Cter in SUMO2). Positions 59–76 (ASSTNSPSCQLAEVSSTG) are enriched in polar residues. Residue Ser64 is modified to Phosphoserine. The segment covering 79 to 91 (EGVKDSHPSEEPV) has biased composition (basic and acidic residues). The segment at 104-133 (GEPVCVVCGRYGEYICDKTDEDVCSLECKA) adopts an HIT-type zinc-finger fold. Ser160 is subject to Phosphoserine. The short motif at 203–231 (IDFEHCGFPETLNQNLKKSGYEVPTPIQM) is the Q motif element. One can recognise a Helicase ATP-binding domain in the interval 234-405 (IPVGLLGRDI…DQLLHNPVRI (172 aa)). ATP is bound at residue 247–254 (ADTGSGKT). The short motif at 353–356 (DEAD) is the DEAD box element. The region spanning 416–579 (SVRQIILWVE…ILPPQLLNSP (164 aa)) is the Helicase C-terminal domain. Basic and acidic residues predominate over residues 583-594 (EQKRKEQQKDRQ). The interval 583 to 603 (EQKRKEQQKDRQTQNSLVTGA) is disordered.

It belongs to the DEAD box helicase family. DDX59 subfamily. In terms of assembly, interacts (via HIT-type zinc finger) with the RUVBL1/RUVBL2 complex in the presence of ADP.

It localises to the cytoplasm. Its subcellular location is the nucleus. The enzyme catalyses ATP + H2O = ADP + phosphate + H(+). The chain is Probable ATP-dependent RNA helicase DDX59 (Ddx59) from Mus musculus (Mouse).